Reading from the N-terminus, the 250-residue chain is DNA repair protein RecO (250 aa).

The protein belongs to the RecO family.

Functionally, involved in DNA repair and RecF pathway recombination. This Beijerinckia indica subsp. indica (strain ATCC 9039 / DSM 1715 / NCIMB 8712) protein is DNA repair protein RecO.